Reading from the N-terminus, the 260-residue chain is Small ribosomal subunit protein eS1 (260 aa).

An N-acetylalanine; partial modification is found at A2.

This sequence belongs to the eukaryotic ribosomal protein eS1 family. In terms of assembly, component of the small ribosomal subunit. Mature ribosomes consist of a small (40S) and a large (60S) subunit. The 40S subunit contains about 33 different proteins and 1 molecule of RNA (18S). The 60S subunit contains about 49 different proteins and 3 molecules of RNA (25S, 5.8S and 5S).

It is found in the cytoplasm. The sequence is that of Small ribosomal subunit protein eS1 from Mycosarcoma maydis (Corn smut fungus).